A 459-amino-acid polypeptide reads, in one-letter code: Eukaryotic translation initiation factor 3 subunit M (459 aa).

The PCI domain maps to 207 to 384 (LDWAQTHVVD…SEFLVHRATY (178 aa)). The interval 431–459 (AAAEGEKGDKNNKGPSERRRAPQEIAAAE) is disordered. Residues 434 to 452 (EGEKGDKNNKGPSERRRAP) are compositionally biased toward basic and acidic residues.

This sequence belongs to the eIF-3 subunit M family. In terms of assembly, component of the eukaryotic translation initiation factor 3 (eIF-3) complex.

It localises to the cytoplasm. Its function is as follows. Component of the eukaryotic translation initiation factor 3 (eIF-3) complex, which is involved in protein synthesis of a specialized repertoire of mRNAs and, together with other initiation factors, stimulates binding of mRNA and methionyl-tRNAi to the 40S ribosome. The eIF-3 complex specifically targets and initiates translation of a subset of mRNAs involved in cell proliferation. This chain is Eukaryotic translation initiation factor 3 subunit M, found in Emericella nidulans (strain FGSC A4 / ATCC 38163 / CBS 112.46 / NRRL 194 / M139) (Aspergillus nidulans).